The primary structure comprises 110 residues: Small ribosomal subunit protein bS16 (110 aa).

A disordered region spans residues 84-110; that stretch reads KRTARNNPEKAVPRKERKAQAEAAAKS. Basic and acidic residues predominate over residues 90–103; it reads NPEKAVPRKERKAQ.

This sequence belongs to the bacterial ribosomal protein bS16 family.

In Nitrobacter hamburgensis (strain DSM 10229 / NCIMB 13809 / X14), this protein is Small ribosomal subunit protein bS16.